We begin with the raw amino-acid sequence, 344 residues long: Glycerol-3-phosphate dehydrogenase [NAD(P)+] (344 aa).

NADPH is bound by residues Trp18, His38, and Lys115. The sn-glycerol 3-phosphate site is built by Lys115, Gly144, and Thr146. Ala148 is an NADPH binding site. Lys199, Asp252, Ser262, Arg263, and Asn264 together coordinate sn-glycerol 3-phosphate. Lys199 (proton acceptor) is an active-site residue. Arg263 serves as a coordination point for NADPH. NADPH contacts are provided by Val288 and Glu290.

The protein belongs to the NAD-dependent glycerol-3-phosphate dehydrogenase family.

It is found in the cytoplasm. It catalyses the reaction sn-glycerol 3-phosphate + NAD(+) = dihydroxyacetone phosphate + NADH + H(+). The enzyme catalyses sn-glycerol 3-phosphate + NADP(+) = dihydroxyacetone phosphate + NADPH + H(+). The protein operates within membrane lipid metabolism; glycerophospholipid metabolism. Catalyzes the reduction of the glycolytic intermediate dihydroxyacetone phosphate (DHAP) to sn-glycerol 3-phosphate (G3P), the key precursor for phospholipid synthesis. The polypeptide is Glycerol-3-phosphate dehydrogenase [NAD(P)+] (Hydrogenovibrio crunogenus (strain DSM 25203 / XCL-2) (Thiomicrospira crunogena)).